Consider the following 384-residue polypeptide: D-galactosamine-6-phosphate deaminase AgaS (384 aa).

SIS domains follow at residues 45–197 (LEPL…SQTF) and 215–364 (SEGV…PDTP).

The protein belongs to the SIS family. AgaS subfamily.

It carries out the reaction D-galactosamine 6-phosphate + H2O = D-tagatopyranose 1-phosphate + NH4(+). Functionally, catalyzes the isomerization-deamination of galactosamine 6-phosphate to form tagatofuranose 6-phosphate and ammonium ion. The chain is D-galactosamine-6-phosphate deaminase AgaS from Escherichia coli.